Consider the following 427-residue polypeptide: MSLNYEQNAADEQFARAHKAVSLSDDEESEGQAETTSAPNQEPHVSKSPREYYDEPGGKGNGSGADDQDEPETEAASGAANTHVVAHHYNELKEAGRKDRQKSKIFFMRNFNNWIKSQLINEYMSQIKQNKRMGDALRVLDMCCGKGGDLLKWEKAAISHLICTDIAEVSVEQCQRRYQDILQRSEKSKFANKFTAEFFACDSTLVRLRERYKDPSLQLNLVSCQFAFHYCFESMAQADCMMRNAAECLKPGGFFIATMPDAYEIIRRLRAAGPDARRFGNDVYSIEFDCETDPLPLFGAKYQFHLEGVVDCPEFLVHFPTLVKLGRKYGLQLLKRSTFADYYKENLHHGRHLLQRMSGLESVQPQRCENDEEFAHVSNFQGAQRSRSVGTLSKSEWEAATLYLVCAFKKCKNTWDTNGKPLFEFDD.

Residues M1–A79 are disordered. A phosphoserine mark is found at S22, S24, S29, S46, and S48. Residues H44–G57 are compositionally biased toward basic and acidic residues. The region spanning S103–C411 is the mRNA cap 0 methyltransferase domain. N112–N113 contacts mRNA. Positions 116, 143, 165, 202, 225, and 230 each coordinate S-adenosyl-L-methionine.

Belongs to the class I-like SAM-binding methyltransferase superfamily. mRNA cap 0 methyltransferase family.

The protein resides in the nucleus. The catalysed reaction is a 5'-end (5'-triphosphoguanosine)-ribonucleoside in mRNA + S-adenosyl-L-methionine = a 5'-end (N(7)-methyl 5'-triphosphoguanosine)-ribonucleoside in mRNA + S-adenosyl-L-homocysteine. In terms of biological role, mRNA-capping methyltransferase that methylates the N7 position of the added guanosine to the 5'-cap structure of mRNAs. Binds RNA containing 5'-terminal GpppC. In Drosophila melanogaster (Fruit fly), this protein is mRNA cap guanine-N(7) methyltransferase.